The chain runs to 203 residues: Ras-related protein Rab-7L1 (203 aa).

GTP contacts are provided by Ser33, Lys34, His35, Tyr36, Lys37, and Thr39. Positions 36-44 match the Effector region motif; that stretch reads YKSTVGVDF. Thr71 carries the phosphothreonine; by LRRK2 modification. Ser72 bears the Phosphoserine; by LRRK2 mark. Residues Lys126, Val156, and Lys157 each contribute to the GTP site. 2 S-geranylgeranyl cysteine lipidation sites follow: Cys202 and Cys203.

Belongs to the small GTPase superfamily. Rab family. Interacts with LRRK2 (via the N-terminus); this interaction is direct and stimulates kinase activity. In terms of processing, in case of Salmonella enterica serovar Typhimurium (S.typhimurium) infection, is proteolytically cleaved between Gly-41 and Val-42 by the GtgE viral protease encoded on the Gifsy-2 lysogen bacteriophage, which therefore prevents the recruitment of RAB29 to S.typhimurium-containing vacuoles. In contrast, no proteolytically cleavage is detected in S.typhi-infected cells. As to expression, ubiquitous.

Its subcellular location is the cell membrane. The protein localises to the cytoplasm. The protein resides in the perinuclear region. It localises to the golgi apparatus. It is found in the golgi apparatus membrane. Its subcellular location is the trans-Golgi network. The protein localises to the vacuole. The protein resides in the cytoskeleton. The small GTPases Rab are key regulators in vesicle trafficking. Essential for maintaining the integrity of the endosome-trans-Golgi network structure. Together with LRRK2, plays a role in the retrograde trafficking pathway for recycling proteins, such as mannose 6 phosphate receptor (M6PR), between lysosomes and the Golgi apparatus in a retromer-dependent manner. Recruits LRRK2 to the Golgi complex and stimulates LRRK2 kinase activity. Stimulates phosphorylation of RAB10 'Thr-73' by LRRK2. Regulates neuronal process morphology in the intact central nervous system (CNS). May play a role in the formation of typhoid toxin transport intermediates during Salmonella enterica serovar Typhi (S.typhi) epithelial cell infection. The sequence is that of Ras-related protein Rab-7L1 (RAB29) from Homo sapiens (Human).